Consider the following 1960-residue polypeptide: Myosin-9 (1960 aa).

Ala2 is modified (N-acetylalanine). The interval 2 to 838 (AQQAADKYLY…RLFTKVKPLL (837 aa)) is mediates interaction with LIMCH1. Lys8 carries the post-translational modification N6-acetyllysine. Residue Tyr11 is modified to Phosphotyrosine. In terms of domain architecture, Myosin N-terminal SH3-like spans 27 to 77 (AAKKLVWVPSDKSGFEPASLKEEVGEEAIVELVENGKKVKVNKDDIQKMNP). The 696-residue stretch at 81 to 776 (SKVEDMAELT…VLAHLEEERD (696 aa)) folds into the Myosin motor domain. At Lys102 the chain carries N6-acetyllysine. 174–181 (GESGAGKT) serves as a coordination point for ATP. An N6-acetyllysine mark is found at Lys299, Lys435, and Lys613. Residue Ser628 is modified to Phosphoserine. The actin-binding stretch occupies residues 654–676 (LAKLMATLRNTNPNFVRCIIPNH). The residue at position 754 (Tyr754) is a Phosphotyrosine. In terms of domain architecture, IQ spans 779–808 (ITDVIIGFQACCRGYLARKAFAKRQQQLTA). A coiled-coil region spans residues 837 to 1926 (LLQVSRQEEE…LKNKLRRGDL (1090 aa)). Lys850 is subject to N6-succinyllysine. N6-acetyllysine occurs at positions 860, 975, and 1024. A compositionally biased stretch (basic and acidic residues) spans 1035-1055 (RLRREEKQRQELEKTRRKLEG). Residues 1035–1057 (RLRREEKQRQELEKTRRKLEGDS) form a disordered region. At Ser1114 the chain carries Phosphoserine. The tract at residues 1118-1137 (EDLESERASRNKAEKQKRDL) is disordered. Residues 1122–1137 (SERASRNKAEKQKRDL) are compositionally biased toward basic and acidic residues. An N6-acetyllysine mark is found at Lys1234, Lys1249, Lys1357, Lys1392, Lys1404, Lys1410, Lys1459, and Lys1638. The residue at position 1669 (Lys1669) is an N6-succinyllysine. The residue at position 1714 (Ser1714) is a Phosphoserine. N6-acetyllysine is present on residues Lys1793, Lys1802, and Lys1845. Residues 1877–1960 (RQLEEAEEEA…ADGAEAKPAE (84 aa)) are disordered. An Omega-N-methylarginine modification is found at Arg1923. Ser1943 carries the phosphoserine modification. A compositionally biased stretch (basic and acidic residues) spans 1948–1960 (DGKADGAEAKPAE).

Belongs to the TRAFAC class myosin-kinesin ATPase superfamily. Myosin family. In terms of assembly, myosin is a hexameric protein that consists of 2 heavy chain subunits (MHC), 2 alkali light chain subunits (MLC) and 2 regulatory light chain subunits (MLC-2). Interacts with RASIP1. Interacts with DDR1. Interacts with PDLIM2. Interacts with SVIL. Interacts with HTRA3. Interacts with Myo7a. Interacts with CFAP95. Interacts with LIMCH1; independently of the integration of MYH9 into the myosin complex. Interacts with RAB3A. Interacts with ZBED4. Interacts with S100A4; this interaction increases cell motility. As to quaternary structure, (Microbial infection) Interacts with herpes simplex virus 1/HHV-1 envelope glycoprotein B. ISGylated. In terms of processing, ubiquitination. In the kidney, expressed in the glomeruli. Also expressed in leukocytes.

The protein resides in the cytoplasm. Its subcellular location is the cytoskeleton. It is found in the cell cortex. It localises to the cytoplasmic vesicle. The protein localises to the secretory vesicle. The protein resides in the cortical granule. Its subcellular location is the cell membrane. Functionally, cellular myosin that appears to play a role in cytokinesis, cell shape, and specialized functions such as secretion and capping. Required for cortical actin clearance prior to oocyte exocytosis. Promotes cell motility in conjunction with S100A4. During cell spreading, plays an important role in cytoskeleton reorganization, focal contact formation (in the margins but not the central part of spreading cells), and lamellipodial retraction; this function is mechanically antagonized by MYH10. In terms of biological role, (Microbial infection) Acts as a receptor for herpes simplex virus 1/HHV-1 envelope glycoprotein B. The chain is Myosin-9 (MYH9) from Homo sapiens (Human).